Consider the following 201-residue polypeptide: UPF0301 protein BP0319 (201 aa).

The protein belongs to the UPF0301 (AlgH) family.

This Bordetella pertussis (strain Tohama I / ATCC BAA-589 / NCTC 13251) protein is UPF0301 protein BP0319.